Reading from the N-terminus, the 256-residue chain is 5-keto-4-deoxy-D-glucarate aldolase (256 aa).

Catalysis depends on His50, which acts as the Proton acceptor. Gln151 is a substrate binding site. Glu153 is a binding site for Mg(2+). The substrate site is built by Ser178 and Asp179. Residue Asp179 coordinates Mg(2+).

It belongs to the HpcH/HpaI aldolase family. KDGluc aldolase subfamily. As to quaternary structure, homohexamer; trimer of dimers. Requires Mg(2+) as cofactor.

The enzyme catalyses 5-dehydro-4-deoxy-D-glucarate = 2-hydroxy-3-oxopropanoate + pyruvate. It carries out the reaction 2-dehydro-3-deoxy-D-glucarate = 2-hydroxy-3-oxopropanoate + pyruvate. Its pathway is carbohydrate acid metabolism; galactarate degradation; D-glycerate from galactarate: step 2/3. Catalyzes the reversible retro-aldol cleavage of both 5-keto-4-deoxy-D-glucarate and 2-keto-3-deoxy-D-glucarate to pyruvate and tartronic semialdehyde. The sequence is that of 5-keto-4-deoxy-D-glucarate aldolase from Salmonella paratyphi A (strain ATCC 9150 / SARB42).